Consider the following 601-residue polypeptide: Kelch-like protein 3 (601 aa).

Positions 63 to 130 constitute a BTB domain; it reads CDVLLVAGEV…IYSAEIEVSE (68 aa). Positions 165–268 constitute a BACK domain; the sequence is CLGIRAFADL…SRDYLVQIVE (104 aa). Kelch repeat units lie at residues 316 to 361, 362 to 408, 410 to 455, 456 to 504, 505 to 551, and 553 to 599; these read VMMV…YMAG, KVYA…VLGD, LYAV…VVDG, KLYA…VLSG, QLYA…AING, and LYVI…VIDK.

Belongs to the KLHL3 family. Component of the BCR(KLHL3) E3 ubiquitin ligase complex, at least composed of cul3 and klhl3 and rbx1.

The protein resides in the cytoplasm. The protein localises to the cytoskeleton. Its subcellular location is the cytosol. It functions in the pathway protein modification; protein ubiquitination. Functionally, substrate-specific adapter of a BCR (BTB-CUL3-RBX1) E3 ubiquitin ligase complex that acts as a regulator of ion transport in the distal nephron. The BCR(KLHL3) complex acts by mediating ubiquitination and degradation of WNK1 and WNK4, two activators of Na-Cl cotransporter SLC12A3/NCC in distal convoluted tubule cells of kidney, thereby regulating NaCl reabsorption. The protein is Kelch-like protein 3 (klhl3) of Danio rerio (Zebrafish).